A 156-amino-acid polypeptide reads, in one-letter code: Small ribosomal subunit protein uS7 (156 aa).

Belongs to the universal ribosomal protein uS7 family. Part of the 30S ribosomal subunit. Contacts proteins S9 and S11.

In terms of biological role, one of the primary rRNA binding proteins, it binds directly to 16S rRNA where it nucleates assembly of the head domain of the 30S subunit. Is located at the subunit interface close to the decoding center, probably blocks exit of the E-site tRNA. This chain is Small ribosomal subunit protein uS7, found in Herminiimonas arsenicoxydans.